The sequence spans 122 residues: Large ribosomal subunit protein bL12 (122 aa).

The protein belongs to the bacterial ribosomal protein bL12 family. Homodimer. Part of the ribosomal stalk of the 50S ribosomal subunit. Forms a multimeric L10(L12)X complex, where L10 forms an elongated spine to which 2 to 4 L12 dimers bind in a sequential fashion. Binds GTP-bound translation factors.

Its function is as follows. Forms part of the ribosomal stalk which helps the ribosome interact with GTP-bound translation factors. Is thus essential for accurate translation. The protein is Large ribosomal subunit protein bL12 of Fusobacterium nucleatum subsp. nucleatum (strain ATCC 25586 / DSM 15643 / BCRC 10681 / CIP 101130 / JCM 8532 / KCTC 2640 / LMG 13131 / VPI 4355).